A 781-amino-acid polypeptide reads, in one-letter code: Death domain-containing protein 1 (781 aa).

ZU5 domains follow at residues 167–301 and 302–483; these read IMEK…VSCL and KKES…VLHL. Residues 679–764 enclose the Death domain; the sequence is DNLLHWLAEE…DLAEELKFKW (86 aa).

This is Death domain-containing protein 1 (DTHD1) from Homo sapiens (Human).